Consider the following 525-residue polypeptide: Zinc finger protein 678 (525 aa).

C2H2-type zinc fingers lie at residues 97–119 (FQCI…KRIH), 125–147 (YKCE…KRIH), 153–175 (YKCD…KKIH), 181–203 (YKCD…KKIH), 209–231 (YPCE…KRIH), 237–259 (YKCK…KRIH), 265–287 (YKCE…RRIH), 293–315 (YKCE…KRIH), 321–343 (YQCE…KRIH), 349–371 (YKCE…KRIH), 377–399 (YKCK…RRIH), 405–427 (YKCE…KRIH), 433–455 (YKCK…KRIH), and 461–483 (YKCE…KRIH). The C2H2-type 15; degenerate zinc finger occupies 489-511 (YKCKECGKGFYQSSIHSKYKRIY).

It belongs to the krueppel C2H2-type zinc-finger protein family.

The protein resides in the nucleus. Its function is as follows. May be involved in transcriptional regulation. The sequence is that of Zinc finger protein 678 (ZNF678) from Homo sapiens (Human).